The following is a 56-amino-acid chain: Prokaryotic ubiquitin-like protein UBact (56 aa).

The disordered stretch occupies residues 1-56 (MPERIVKPMPQDPVTKPGDEGPRTPNVPKPDTERLLERMRRVDPRQAQRYRQRSGE). Positions 30 to 46 (PDTERLLERMRRVDPRQ) are enriched in basic and acidic residues. An Isoglutamyl lysine isopeptide (Glu-Lys) (interchain with K-? in acceptor proteins) cross-link involves residue glutamate 56.

The protein belongs to the ubiquitin-like protein UBact family.

Functionally, may function as a protein modifier covalently attached to lysine residues of substrate proteins. This may serve to target the modified proteins for degradation by proteasomes. This Acetithermum autotrophicum protein is Prokaryotic ubiquitin-like protein UBact.